The following is a 383-amino-acid chain: Probable tRNA sulfurtransferase (383 aa).

The region spanning 58 to 158 (NEIIHILKMI…ENKSYVWFDK (101 aa)) is the THUMP domain. Residues 176-177 (LL), 201-202 (TF), Arg259, Gly281, and Gln290 each bind ATP.

It belongs to the ThiI family.

Its subcellular location is the cytoplasm. The enzyme catalyses [ThiI sulfur-carrier protein]-S-sulfanyl-L-cysteine + a uridine in tRNA + 2 reduced [2Fe-2S]-[ferredoxin] + ATP + H(+) = [ThiI sulfur-carrier protein]-L-cysteine + a 4-thiouridine in tRNA + 2 oxidized [2Fe-2S]-[ferredoxin] + AMP + diphosphate. It catalyses the reaction [ThiS sulfur-carrier protein]-C-terminal Gly-Gly-AMP + S-sulfanyl-L-cysteinyl-[cysteine desulfurase] + AH2 = [ThiS sulfur-carrier protein]-C-terminal-Gly-aminoethanethioate + L-cysteinyl-[cysteine desulfurase] + A + AMP + 2 H(+). Its pathway is cofactor biosynthesis; thiamine diphosphate biosynthesis. Its function is as follows. Catalyzes the ATP-dependent transfer of a sulfur to tRNA to produce 4-thiouridine in position 8 of tRNAs, which functions as a near-UV photosensor. Also catalyzes the transfer of sulfur to the sulfur carrier protein ThiS, forming ThiS-thiocarboxylate. This is a step in the synthesis of thiazole, in the thiamine biosynthesis pathway. The sulfur is donated as persulfide by IscS. The polypeptide is Probable tRNA sulfurtransferase (Malacoplasma penetrans (strain HF-2) (Mycoplasma penetrans)).